Reading from the N-terminus, the 1391-residue chain is Nuclear pore complex protein Nup155 (1391 aa).

A glycan (O-linked (GlcNAc) serine) is linked at serine 526. 2 disordered regions span residues serine 604 to proline 630 and glutamine 985 to serine 1012. Serine 1057 bears the Phosphoserine mark.

The protein belongs to the non-repetitive/WGA-negative nucleoporin family. Interacts with GLE1 and NUP35/NUP53. Able to form a heterotrimer with GLE1 and NUP42 in vitro. Forms a complex with NUP35, NUP93, NUP205 and lamin B. Post-translationally, phosphorylated. Phosphorylation and dephosphorylation may be important for the function of NUP155 and may play a role in the reversible disassembly of the nuclear pore complex during mitosis. Disulfide-linked to NUP62. The inner channel of the NPC has a different redox environment from the cytoplasm and allows the formation of interchain disulfide bonds between some nucleoporins, the significant increase of these linkages upon oxidative stress reduces the permeability of the NPC.

Its subcellular location is the nucleus. The protein localises to the nuclear pore complex. It is found in the nucleus membrane. Essential component of nuclear pore complex. Could be essessential for embryogenesis. Nucleoporins may be involved both in binding and translocating proteins during nucleocytoplasmic transport. The chain is Nuclear pore complex protein Nup155 (Nup155) from Mus musculus (Mouse).